We begin with the raw amino-acid sequence, 276 residues long: U6 snRNA phosphodiesterase 1 (276 aa).

The tract at residues 1–58 is disordered; it reads MIVNYSSSSSEEESGSSSSPSGKRQKLDTETSEALDHGSAQRKVCKSSHLTPRLPLPE. His-131 functions as the Proton acceptor in the catalytic mechanism. AMP is bound by residues 131 to 133, Tyr-213, and 215 to 221; these read HLS and DPSFHIS. UMP contacts are provided by residues Tyr-213 and 217 to 221; that span reads SFHIS. The Proton donor role is filled by His-219.

This sequence belongs to the 2H phosphoesterase superfamily. USB1 family.

It is found in the nucleus. The catalysed reaction is a 3'-end uridylyl-uridine-RNA = a 3'-end 2',3'-cyclophospho-uridine-RNA + uridine. It carries out the reaction a 3'-end uridylyl-adenosine-RNA = a 3'-end 2',3'-cyclophospho-uridine-RNA + adenosine. 3'-5' RNA exonuclease that trims the 3' end of oligo(U) and oligo(A) tracts of the pre-U6 small nuclear RNA (snRNA) molecule, leading to the formation of a mature U6 snRNA 3' end-terminated with a 2',3'-cyclic phosphate. Participates in the U6 snRNA 3' end processing that prevents U6 snRNA degradation. In addition also removes uridines from the 3' end of U6atac snRNA and possibly the vault RNA VTRNA1-1. The sequence is that of U6 snRNA phosphodiesterase 1 from Danio rerio (Zebrafish).